We begin with the raw amino-acid sequence, 1184 residues long: DNA-directed RNA polymerase subunit beta' (1184 aa).

The Zn(2+) site is built by cysteine 60, cysteine 62, cysteine 75, and cysteine 78. Residues aspartate 449, aspartate 451, and aspartate 453 each coordinate Mg(2+). Zn(2+)-binding residues include cysteine 794, cysteine 867, cysteine 874, and cysteine 877.

Belongs to the RNA polymerase beta' chain family. As to quaternary structure, the RNAP catalytic core consists of 2 alpha, 1 beta, 1 beta' and 1 omega subunit. When a sigma factor is associated with the core the holoenzyme is formed, which can initiate transcription. Requires Mg(2+) as cofactor. The cofactor is Zn(2+).

The enzyme catalyses RNA(n) + a ribonucleoside 5'-triphosphate = RNA(n+1) + diphosphate. Functionally, DNA-dependent RNA polymerase catalyzes the transcription of DNA into RNA using the four ribonucleoside triphosphates as substrates. In Thermoanaerobacter sp. (strain X514), this protein is DNA-directed RNA polymerase subunit beta'.